Reading from the N-terminus, the 409-residue chain is LysM domain-containing GPI-anchored protein LYP6 (409 aa).

Positions 1–27 are cleaved as a signal peptide; that stretch reads MAGWPAAEAAGALVVAILAAAAGGAAG. Cystine bridges form between C34-C100, C40-C166, C98-C164, and C100-C166. The LysM 1 domain occupies 110–160; that stretch reads VRYSARPADTLASVADVVFAGLASADQIRTANGLSAEDPDAPLDAGATLVV. N168 is a glycosylation site (N-linked (GlcNAc...) asparagine). Residues 179 to 222 form the LysM 2 domain; sequence LSYVVRVGDTVQSIAATHATTVTDISNVNAMGSPIVAPGDILAI. Disulfide bonds link C227/C259 and C254/C282. The N-linked (GlcNAc...) asparagine glycan is linked to N244. N-linked (GlcNAc...) asparagine glycans are attached at residues N291, N302, and N313. Residues 353–387 form a disordered region; sequence SPAPGAGEAGGDIPGFPGSSNVSPANGPSGSVSQA. The segment covering 370–387 has biased composition (polar residues); the sequence is GSSNVSPANGPSGSVSQA. A387 carries the GPI-anchor amidated alanine lipid modification. Positions 388–409 are cleaved as a propeptide — removed in mature form; it reads ASVNRPHQIVALILSVALYFQM.

In terms of assembly, interacts with LYP4. Interacts with CERK1. Interacts with CEBIP. In terms of tissue distribution, expressed in roots and leaves.

Its subcellular location is the cell membrane. Its function is as follows. Functions in innate immunity. Functions as a pattern recognition receptor (PRR), sensing bacterial peptidoglycan (PGN) and fungal chitin at the cell surface. Involved in resistance against the bacterial pathogen Xanthomonas oryzae pv. oryzae (Xoo) and the fungal pathogen Magnaporthe oryzae. Binds PGN and fungal chitin in vitro. Involved in microbe-associated molecular patterns (MAMPs) perception and participates in the activation of defense genes against the bacterial pathogen Xanthomonas oryzae pv. oryzicola (Xoc) or the fungal pathogen Magnaporthe oryzae. The protein is LysM domain-containing GPI-anchored protein LYP6 of Oryza sativa subsp. japonica (Rice).